The following is a 460-amino-acid chain: Bifunctional beta-D-glucosidase/beta-D-fucosidase (460 aa).

The Proton donor role is filled by E168. The active-site Nucleophile is E362.

The protein belongs to the glycosyl hydrolase 1 family. Monomer.

The protein resides in the secreted. The enzyme catalyses Hydrolysis of terminal, non-reducing beta-D-glucosyl residues with release of beta-D-glucose.. It catalyses the reaction Hydrolysis of terminal non-reducing beta-D-fucose residues in beta-D-fucosides.. Its activity is regulated as follows. Inhibited by Cu(2+), Ag(+) and Hg(+), but not by other cations such as Mg(2+), Ca(2+), Mn(2+) and Co(2+). Inhibited by 1-amino-1-deoxy-D-glucose and p-chloromercuribenzoic acid, but not by EDTA or dithiothreitol. Inhibited by the disaccharides sucrose, lactose and cellobiose. The monosaccharides D-fructose, D-mannose, D-xylose and D-glucose increase the beta-D-fucosidase activity, but not the beta-D-glucosidase activity. D-glucose inhibits the beta-D-glucosidase activity, but promotes the beta-D-fucosidase activity. D-fucose inhibits the beta-D-glucosidase activity and does not significantly affect the beta-D-fucosidase activity. In terms of biological role, bifunctional beta-D-glucosidase/beta-D-fucosidase. Activity towards pNP-beta-D-fucoside is about 80-85% of the activity towards pNP-beta-D-glucoside. Also has slight activity (less than 10%) towards pNP-beta-D-galactoside, and very low activity (less than 1%) towards pNP-beta-D-xyloside. Hydrolyzes laminaribiose, sophorose, cellobiose and gentobiose. Not active against maltose, pNP-alpha-D-glucoside or pNP-beta-L-fucoside. This is Bifunctional beta-D-glucosidase/beta-D-fucosidase from Bifidobacterium breve.